A 199-amino-acid chain; its full sequence is Oligoribonuclease (199 aa).

Residues 5 to 170 (LVWIDCEMTG…ADIRESIREL (166 aa)) enclose the Exonuclease domain. Residue Tyr-127 is part of the active site.

The protein belongs to the oligoribonuclease family.

It is found in the cytoplasm. Functionally, 3'-to-5' exoribonuclease specific for small oligoribonucleotides. This is Oligoribonuclease from Rhodococcus jostii (strain RHA1).